The chain runs to 260 residues: MLHIADKTFDSHLIMGTGGATSQALLEESLVASGTQLTTVAMRRHQATTSSGESIFAMLRRLEIALLPNTAGCRTARDAVLTAQLAREALDTNWVKVEVIADEHTLLPDTVELLDACELLVHDGFTVLAYTSDDPITASRLEDCGVAAVMPLGSPIGTGLGILNPHNIELICSRASVPVILDAGVGTASDATLAMELGCDGVLLASAINRAQNPVAMAKSMFHAVEAGRLAAQAGRIPQRQHAVASSSFEGLASWAEQVL.

K96 functions as the Schiff-base intermediate with DXP in the catalytic mechanism. Residues G157, 183 to 184 (AG), and 205 to 206 (AS) each bind 1-deoxy-D-xylulose 5-phosphate.

Belongs to the ThiG family. Homotetramer. Forms heterodimers with either ThiH or ThiS.

Its subcellular location is the cytoplasm. The catalysed reaction is [ThiS sulfur-carrier protein]-C-terminal-Gly-aminoethanethioate + 2-iminoacetate + 1-deoxy-D-xylulose 5-phosphate = [ThiS sulfur-carrier protein]-C-terminal Gly-Gly + 2-[(2R,5Z)-2-carboxy-4-methylthiazol-5(2H)-ylidene]ethyl phosphate + 2 H2O + H(+). It functions in the pathway cofactor biosynthesis; thiamine diphosphate biosynthesis. Its function is as follows. Catalyzes the rearrangement of 1-deoxy-D-xylulose 5-phosphate (DXP) to produce the thiazole phosphate moiety of thiamine. Sulfur is provided by the thiocarboxylate moiety of the carrier protein ThiS. In vitro, sulfur can be provided by H(2)S. In Corynebacterium glutamicum (strain R), this protein is Thiazole synthase.